Reading from the N-terminus, the 295-residue chain is Pyridoxal 5'-phosphate synthase subunit PdxS (295 aa).

Aspartate 25 contributes to the D-ribose 5-phosphate binding site. Catalysis depends on lysine 82, which acts as the Schiff-base intermediate with D-ribose 5-phosphate. Residue glycine 154 coordinates D-ribose 5-phosphate. Arginine 166 serves as a coordination point for D-glyceraldehyde 3-phosphate. Residues glycine 215 and glycine 236–serine 237 each bind D-ribose 5-phosphate.

Belongs to the PdxS/SNZ family. As to quaternary structure, in the presence of PdxT, forms a dodecamer of heterodimers.

The enzyme catalyses aldehydo-D-ribose 5-phosphate + D-glyceraldehyde 3-phosphate + L-glutamine = pyridoxal 5'-phosphate + L-glutamate + phosphate + 3 H2O + H(+). It participates in cofactor biosynthesis; pyridoxal 5'-phosphate biosynthesis. In terms of biological role, catalyzes the formation of pyridoxal 5'-phosphate from ribose 5-phosphate (RBP), glyceraldehyde 3-phosphate (G3P) and ammonia. The ammonia is provided by the PdxT subunit. Can also use ribulose 5-phosphate and dihydroxyacetone phosphate as substrates, resulting from enzyme-catalyzed isomerization of RBP and G3P, respectively. In Bacillus mycoides (strain KBAB4) (Bacillus weihenstephanensis), this protein is Pyridoxal 5'-phosphate synthase subunit PdxS.